The chain runs to 156 residues: 6,7-dimethyl-8-ribityllumazine synthase (156 aa).

Residues Phe22, 56-58, and 80-82 contribute to the 5-amino-6-(D-ribitylamino)uracil site; these read AFE and AVI. 85-86 lines the (2S)-2-hydroxy-3-oxobutyl phosphate pocket; sequence ST. The active-site Proton donor is the His88. Phe113 lines the 5-amino-6-(D-ribitylamino)uracil pocket. (2S)-2-hydroxy-3-oxobutyl phosphate is bound at residue Arg127.

Belongs to the DMRL synthase family.

It catalyses the reaction (2S)-2-hydroxy-3-oxobutyl phosphate + 5-amino-6-(D-ribitylamino)uracil = 6,7-dimethyl-8-(1-D-ribityl)lumazine + phosphate + 2 H2O + H(+). It participates in cofactor biosynthesis; riboflavin biosynthesis; riboflavin from 2-hydroxy-3-oxobutyl phosphate and 5-amino-6-(D-ribitylamino)uracil: step 1/2. In terms of biological role, catalyzes the formation of 6,7-dimethyl-8-ribityllumazine by condensation of 5-amino-6-(D-ribitylamino)uracil with 3,4-dihydroxy-2-butanone 4-phosphate. This is the penultimate step in the biosynthesis of riboflavin. The chain is 6,7-dimethyl-8-ribityllumazine synthase from Caldicellulosiruptor saccharolyticus (strain ATCC 43494 / DSM 8903 / Tp8T 6331).